The primary structure comprises 710 residues: Protein Smaug homolog 1 (710 aa).

2 disordered regions span residues 276–319 (ARGS…FQDE) and 441–476 (NQAT…ESDL). Over residues 309–318 (QSTACNTFQD) the composition is skewed to polar residues. The SAM domain maps to 319–379 (EGSGMKDVPA…KIVISIQKLK (61 aa)).

Belongs to the SMAUG family.

The protein localises to the cytoplasm. It is found in the cell projection. It localises to the dendrite. Its subcellular location is the synapse. The protein resides in the synaptosome. Its function is as follows. Acts as a translational repressor. The sequence is that of Protein Smaug homolog 1 (samd4a) from Xenopus laevis (African clawed frog).